The chain runs to 124 residues: uncharacterized protein (124 aa).

This is an uncharacterized protein from Magallana gigas (Pacific oyster).